Reading from the N-terminus, the 1481-residue chain is RNA helicase aquarius (1481 aa).

Residues 1 to 416 (MAAPAQPKKI…LVSRHERRIS (416 aa)) form a helical region with structural similarity to ARM repeat domains region. The interval 417–1481 (QIQQLNQMPL…DAESVPTETE (1065 aa)) is required for assembly of the IB complex. The tract at residues 754-773 (RSGKGKKRKDADGEEDDTEE) is disordered. Residues Gln801, Gln806, and 826-831 (GTGKTD) each bind ATP. An N6-acetyllysine modification is found at Lys1055. The span at 1396 to 1414 (EEGEEGQSQETEMEAEEET) shows a compositional bias: acidic residues. A disordered region spans residues 1396-1481 (EEGEEGQSQE…DAESVPTETE (86 aa)). The segment covering 1418 to 1448 (QGNLTPSPADASLSQETPAAQPDCSSQTEDT) has biased composition (polar residues). Residues 1455-1468 (ATAAEPVSAAAEAA) show a composition bias toward low complexity.

It belongs to the CWF11 family. Identified in the spliceosome C complex. Component of the XAB2 complex, a multimeric protein complex composed of XAB2, PRPF19, AQR, ZNF830, ISY1, and PPIE. Identified in a pentameric intron-binding (IB) complex composed of AQR, XAB2, ISY1, ZNF830 and PPIE that is incorporated into the spliceosome as a preassembled complex. The IB complex does not contain PRPF19. Within the spliceosome, interacts with SNRPA1, SF3B1, SF3B3, SF3A1 and SF3A2.

The protein localises to the nucleus. Its subcellular location is the nucleoplasm. The enzyme catalyses ATP + H2O = ADP + phosphate + H(+). Involved in pre-mRNA splicing as component of the spliceosome. Intron-binding spliceosomal protein required to link pre-mRNA splicing and snoRNP (small nucleolar ribonucleoprotein) biogenesis. Plays a key role in position-dependent assembly of intron-encoded box C/D small snoRNP, splicing being required for snoRNP assembly. May act by helping the folding of the snoRNA sequence. Binds to intron of pre-mRNAs in a sequence-independent manner, contacting the region between snoRNA and the branchpoint of introns (40 nucleotides upstream of the branchpoint) during the late stages of splicing. Has ATP-dependent RNA helicase activity and can unwind double-stranded RNA molecules with a 3' overhang (in vitro). In Mus musculus (Mouse), this protein is RNA helicase aquarius (Aqr).